A 132-amino-acid chain; its full sequence is Ribonuclease P protein component 4 (132 aa).

Cysteine 67, cysteine 70, cysteine 96, and cysteine 99 together coordinate Zn(2+).

It belongs to the eukaryotic/archaeal RNase P protein component 4 family. In terms of assembly, consists of a catalytic RNA component and at least 4-5 protein subunits. Zn(2+) is required as a cofactor.

It is found in the cytoplasm. The enzyme catalyses Endonucleolytic cleavage of RNA, removing 5'-extranucleotides from tRNA precursor.. Functionally, part of ribonuclease P, a protein complex that generates mature tRNA molecules by cleaving their 5'-ends. In Thermococcus kodakarensis (strain ATCC BAA-918 / JCM 12380 / KOD1) (Pyrococcus kodakaraensis (strain KOD1)), this protein is Ribonuclease P protein component 4.